A 790-amino-acid chain; its full sequence is Histone-lysine N-methyltransferase, H3 lysine-9 specific SUVH6 (790 aa).

Positions 251–271 are disordered; the sequence is QLRILGVGTSSGSSSGDSSRN. The segment covering 256–268 has biased composition (low complexity); it reads GVGTSSGSSSGDS. The YDG domain occupies 330–482; the sequence is GEVPGVEVGD…MNVFKFQLRR (153 aa). A Pre-SET domain is found at 551–613; that stretch reads KSCCCTTRCT…SCYLRVTQHG (63 aa). 10 residues coordinate Zn(2+): cysteine 553, cysteine 554, cysteine 555, cysteine 559, cysteine 567, cysteine 569, cysteine 595, cysteine 599, cysteine 601, and cysteine 605. The SET domain maps to 616-760; it reads LPLEIFKTKS…PLQELCYDYN (145 aa). Residues 626–628, aspartate 662, tyrosine 664, arginine 714, and 717–718 contribute to the S-adenosyl-L-methionine site; these read RGW and NH. Cysteine 720, cysteine 778, cysteine 780, and cysteine 785 together coordinate Zn(2+). Residues 774–790 form the Post-SET domain; the sequence is KQKPCFCGAAVCRRRLY.

It belongs to the class V-like SAM-binding methyltransferase superfamily. Histone-lysine methyltransferase family. Suvar3-9 subfamily.

It localises to the nucleus. It is found in the chromosome. The protein localises to the centromere. It carries out the reaction N(6)-methyl-L-lysyl(9)-[histone H3] + S-adenosyl-L-methionine = N(6),N(6)-dimethyl-L-lysyl(9)-[histone H3] + S-adenosyl-L-homocysteine + H(+). The catalysed reaction is L-lysyl(9)-[histone H3] + S-adenosyl-L-methionine = N(6)-methyl-L-lysyl(9)-[histone H3] + S-adenosyl-L-homocysteine + H(+). Functionally, histone methyltransferase. Methylates 'Lys-9' of histone H3. H3 'Lys-9' methylation represents a specific tag for epigenetic transcriptional repression. Seems to act preferentially on dsMRNA. In Arabidopsis thaliana (Mouse-ear cress), this protein is Histone-lysine N-methyltransferase, H3 lysine-9 specific SUVH6 (SUVH6).